We begin with the raw amino-acid sequence, 484 residues long: Rho guanine nucleotide exchange factor 35 (484 aa).

The segment at 139–418 (FSSDLGSEEE…ALIAPEDSPH (280 aa)) is disordered. Serine 184 carries the phosphoserine modification. Low complexity predominate over residues 217–237 (ESQGLLHPQEVQVLEEQGQQE). Residues 266–278 (NDEKGEQKQKQEQ) are compositionally biased toward basic and acidic residues. Acidic residues predominate over residues 299–309 (GLNDGEWEQED). 2 stretches are compositionally biased toward basic and acidic residues: residues 323 to 368 (GEER…KEKG) and 394 to 404 (RSREEENEHHG).

In Homo sapiens (Human), this protein is Rho guanine nucleotide exchange factor 35 (ARHGEF35).